Reading from the N-terminus, the 212-residue chain is Uridine kinase (212 aa).

Residue 13–20 (GASASGKS) participates in ATP binding.

The protein belongs to the uridine kinase family.

It localises to the cytoplasm. It carries out the reaction uridine + ATP = UMP + ADP + H(+). The enzyme catalyses cytidine + ATP = CMP + ADP + H(+). It functions in the pathway pyrimidine metabolism; CTP biosynthesis via salvage pathway; CTP from cytidine: step 1/3. The protein operates within pyrimidine metabolism; UMP biosynthesis via salvage pathway; UMP from uridine: step 1/1. The protein is Uridine kinase of Shewanella putrefaciens (strain CN-32 / ATCC BAA-453).